The primary structure comprises 369 residues: MGMISFETKTKIEELEKKYKDVLSVVNEDEINKELEEVEKKLTDPSVWDDQKKAREYTQKLKRLKNISEDLKRVRSLFEDLEVAIELSDEDQEMAQHVEEIVQELEGAVKKLELEIILNGKYDPNNAYLSVHPGAGGTESQDWAQMLLRMYMRWAERKGFDVEIVEFQPGEEAGIKDATILIKGEYAYGYLKHESGVHRLVRISPFDAARRRHTSFASVNVIPEIDDDVDIEIRPEDLKIETFRASGHGGQYVNKTESAVRITHLPTGIVVSCQNERSQHQNKQTALKILKAKLYQLEMEKKRREIQEIQGELKDISWGNQIRSYIFHPYTMVKDHRTGVETANVDAVMDGDIDMFIEAELVYFARRSS.

Gln251 is modified (N5-methylglutamine).

Belongs to the prokaryotic/mitochondrial release factor family. In terms of processing, methylated by PrmC. Methylation increases the termination efficiency of RF2.

The protein localises to the cytoplasm. Functionally, peptide chain release factor 2 directs the termination of translation in response to the peptide chain termination codons UGA and UAA. The protein is Peptide chain release factor 2 (prfB) of Thermotoga maritima (strain ATCC 43589 / DSM 3109 / JCM 10099 / NBRC 100826 / MSB8).